The sequence spans 437 residues: Glutamate-1-semialdehyde 2,1-aminomutase (437 aa).

N6-(pyridoxal phosphate)lysine is present on Lys274.

It belongs to the class-III pyridoxal-phosphate-dependent aminotransferase family. HemL subfamily. As to quaternary structure, homodimer. Requires pyridoxal 5'-phosphate as cofactor.

It is found in the cytoplasm. The enzyme catalyses (S)-4-amino-5-oxopentanoate = 5-aminolevulinate. It participates in porphyrin-containing compound metabolism; protoporphyrin-IX biosynthesis; 5-aminolevulinate from L-glutamyl-tRNA(Glu): step 2/2. This Verminephrobacter eiseniae (strain EF01-2) protein is Glutamate-1-semialdehyde 2,1-aminomutase.